Consider the following 133-residue polypeptide: Probable non-specific lipid-transfer protein 2 (133 aa).

Residues 1–31 form the signal peptide; it reads MRTVSMAALVVIAAALAWTSSAELASAPAPG. 4 cysteine pairs are disulfide-bonded: cysteine 35/cysteine 83, cysteine 45/cysteine 60, cysteine 61/cysteine 106, and cysteine 81/cysteine 121.

This sequence belongs to the plant LTP family.

Its function is as follows. Plant non-specific lipid-transfer proteins transfer phospholipids as well as galactolipids across membranes. May play a role in wax or cutin deposition in the cell walls of expanding epidermal cells and certain secretory tissues. The polypeptide is Probable non-specific lipid-transfer protein 2 (Parietaria judaica (Pellitory-of-the-wall)).